Here is a 157-residue protein sequence, read N- to C-terminus: NudC domain-containing protein 2 (157 aa).

S2 is modified (N-acetylserine). Residues 14-104 (CGTPWGQWYQ…DAANCWTSLL (91 aa)) form the CS domain. The segment at 134 to 157 (FDFSGAEISGNYTKGGPDFSNLEK) is disordered. S142 carries the post-translational modification Phosphoserine. The residue at position 145 (Y145) is a Phosphotyrosine.

As to quaternary structure, interacts with LIS1.

The protein resides in the chromosome. Its subcellular location is the centromere. It is found in the kinetochore. It localises to the cytoplasm. The protein localises to the cytoskeleton. The protein resides in the microtubule organizing center. Its subcellular location is the centrosome. It is found in the spindle pole. Functionally, may regulate the LIS1/dynein pathway by stabilizing LIS1 with Hsp90 chaperone. This Mus musculus (Mouse) protein is NudC domain-containing protein 2 (Nudcd2).